The primary structure comprises 600 residues: Repressor of filamentous growth 1 (600 aa).

Positions 1 to 14 (MSTAIYYSTHNNMH) are enriched in polar residues. Disordered stretches follow at residues 1-59 (MSTA…NSAN), 112-160 (NGGY…TDIS), 180-200 (GIDG…NNNN), 266-337 (AEEE…SRDN), 427-549 (STTS…GYDN), and 564-600 (QQGL…QPPQ). 2 stretches are compositionally biased toward low complexity: residues 20-39 (TNGS…SNPN) and 47-59 (INNN…NSAN). Residues 131–160 (FDTSYSNQTTPTSAYTNFNNDSTHSPTDIS) show a composition bias toward polar residues. The segment covering 188–200 (NNNNNNNNNNNNN) has biased composition (low complexity). Positions 212 to 281 (IPRPRNAFIL…NHAKKYPGYR (70 aa)) form a DNA-binding region, HMG box. Positions 272-289 (NHAKKYPGYRYTPRRNGR) are enriched in basic residues. Over residues 297–312 (KNKPLPNNKSNSISGM) the composition is skewed to low complexity. Positions 313–322 (SGSGGGGGSI) are enriched in gly residues. Residues 427–470 (STTSTTAPTTTTTTTTNASSIGLSVPPTATTTSTSSQPTSANSQ) show a composition bias toward low complexity. The span at 481–496 (PVSSTHHQSSISEIAA) shows a compositional bias: polar residues. Residues 497 to 506 (QQQQQQQQQQ) are compositionally biased toward low complexity. The span at 507–547 (FMYNTNYSTIPPNNTTTMQQHSAGTGNDYSLNGNNSGNTGY) shows a compositional bias: polar residues. 2 stretches are compositionally biased toward low complexity: residues 564–574 (QQGLQVQQQGQ) and 581–600 (HAAQ…QPPQ).

Its subcellular location is the nucleus. In terms of biological role, transcription regulator that functions in both the positive and negative regulation of filamentous growth, depending upon the environmental conditions. Recruits the TUP1/SSN6 general repression complex to achieve repression. Regulates genes encoding cell wall components that are specifically expressed in the filamentous forms such as HWP1, RBT1, HYR1, ECE1, ALS1, RBT4 and RBT5. The sequence is that of Repressor of filamentous growth 1 (RFG1) from Candida albicans (strain SC5314 / ATCC MYA-2876) (Yeast).